A 220-amino-acid chain; its full sequence is Large ribosomal subunit protein uL3 (220 aa).

A disordered region spans residues 61–81; it reads KGSKSNKYANKPAEGHAKKAD.

Belongs to the universal ribosomal protein uL3 family. Part of the 50S ribosomal subunit. Forms a cluster with proteins L14 and L19.

Its function is as follows. One of the primary rRNA binding proteins, it binds directly near the 3'-end of the 23S rRNA, where it nucleates assembly of the 50S subunit. The chain is Large ribosomal subunit protein uL3 from Staphylococcus epidermidis (strain ATCC 12228 / FDA PCI 1200).